The chain runs to 355 residues: Ubiquinone biosynthesis protein COQ4 homolog, mitochondrial (355 aa).

The Zn(2+) site is built by His134, Asp135, His138, and Glu150.

This sequence belongs to the COQ4 family. Component of a multi-subunit COQ enzyme complex. The cofactor is Zn(2+).

The protein localises to the mitochondrion inner membrane. The enzyme catalyses a 4-hydroxy-3-methoxy-5-(all-trans-polyprenyl)benzoate + H(+) = a 2-methoxy-6-(all-trans-polyprenyl)phenol + CO2. The protein operates within cofactor biosynthesis; ubiquinone biosynthesis. Functionally, lyase that catalyzes the C1-decarboxylation of 4-hydroxy-3-methoxy-5-(all-trans-polyprenyl)benzoic acid into 2-methoxy-6-(all-trans-polyprenyl)phenol during ubiquinone biosynthesis. The protein is Ubiquinone biosynthesis protein COQ4 homolog, mitochondrial of Plasmodium yoelii yoelii.